Here is a 103-residue protein sequence, read N- to C-terminus: MIGKEVTVQDFVLKLSEIQPEVLPVDLLCEEELPNEQETEEELDIERTVFKIVAPCGCSCCQVKLRLFVNATDSGIRTFQELLFRDLQLLCPECRGNCKHGGS.

The segment at 1 to 45 (MIGKEVTVQDFVLKLSEIQPEVLPVDLLCEEELPNEQETEEELDI) is E7 terminal domain. The short motif at 27-31 (LLCEE) is the LXCXE motif; interaction with host RB1 and TMEM173/STING element. A zinc finger spans residues 56–94 (CGCSCCQVKLRLFVNATDSGIRTFQELLFRDLQLLCPEC). The Nuclear export signal motif lies at 76-84 (IRTFQELLF).

Belongs to the papillomaviridae E7 protein family. Homodimer. Homooligomer. Interacts with host RB1; this interaction induces dissociation of RB1-E2F1 complex thereby disrupting RB1 activity. Interacts with host EP300; this interaction represses EP300 transcriptional activity. Interacts with protein E2; this interaction inhibits E7 oncogenic activity. Interacts with host TMEM173/STING; this interaction impairs the ability of TMEM173/STING to sense cytosolic DNA and promote the production of type I interferon (IFN-alpha and IFN-beta). In terms of processing, highly phosphorylated.

The protein localises to the host cytoplasm. It localises to the host nucleus. Its function is as follows. Plays a role in viral genome replication by driving entry of quiescent cells into the cell cycle. Stimulation of progression from G1 to S phase allows the virus to efficiently use the cellular DNA replicating machinery to achieve viral genome replication. E7 protein has both transforming and trans-activating activities. Induces the disassembly of the E2F1 transcription factor from RB1, with subsequent transcriptional activation of E2F1-regulated S-phase genes. Interferes with host histone deacetylation mediated by HDAC1 and HDAC2, leading to transcription activation. Also plays a role in the inhibition of both antiviral and antiproliferative functions of host interferon alpha. Interaction with host TMEM173/STING impairs the ability of TMEM173/STING to sense cytosolic DNA and promote the production of type I interferon (IFN-alpha and IFN-beta). This chain is Protein E7, found in Human papillomavirus type 8.